Reading from the N-terminus, the 201-residue chain is Dephospho-CoA kinase (201 aa).

One can recognise a DPCK domain in the interval 4 to 201 (SVGLTGNIAS…KYLREAKIKQ (198 aa)). 12-17 (ASGKST) is a binding site for ATP.

The protein belongs to the CoaE family.

It is found in the cytoplasm. It carries out the reaction 3'-dephospho-CoA + ATP = ADP + CoA + H(+). The protein operates within cofactor biosynthesis; coenzyme A biosynthesis; CoA from (R)-pantothenate: step 5/5. Functionally, catalyzes the phosphorylation of the 3'-hydroxyl group of dephosphocoenzyme A to form coenzyme A. In Legionella pneumophila (strain Lens), this protein is Dephospho-CoA kinase.